Consider the following 374-residue polypeptide: Type IV secretion system protein PtlG (374 aa).

The helical transmembrane segment at 38–56 threads the bilayer; that stretch reads WMFALVAVALSCLLATGIW. The tract at residues 86-117 is disordered; it reads HPREPEPAPLPDMPAAPDPILPQPRPAPPVPP. Pro residues predominate over residues 92–117; the sequence is PAPLPDMPAAPDPILPQPRPAPPVPP.

This sequence belongs to the TrbI/VirB10 family.

The protein resides in the cell membrane. Its function is as follows. Component of the type IV secretion system ptl required for secretion of assembled pertussis toxin (PTX) through the outer membrane. The sequence is that of Type IV secretion system protein PtlG (ptlG) from Bordetella pertussis (strain Tohama I / ATCC BAA-589 / NCTC 13251).